Consider the following 156-residue polypeptide: Cyanate hydratase (156 aa).

Active-site residues include R96, E99, and S122.

This sequence belongs to the cyanase family. In terms of assembly, homodecamer composed of five homodimers.

The catalysed reaction is cyanate + hydrogencarbonate + 3 H(+) = NH4(+) + 2 CO2. Functionally, catalyzes the reaction of cyanate with bicarbonate to produce ammonia and carbon dioxide. This chain is Cyanate hydratase (cynS), found in Escherichia coli O157:H7.